The following is a 135-amino-acid chain: Large ribosomal subunit protein uL16c (135 aa).

The protein belongs to the universal ribosomal protein uL16 family. In terms of assembly, part of the 50S ribosomal subunit.

It localises to the plastid. It is found in the chloroplast. This is Large ribosomal subunit protein uL16c from Lepidium virginicum (Virginia pepperweed).